The primary structure comprises 425 residues: MNQQWTQYIQIIKQVVKPALGCTEPIAAAYAAAVARKELGTSDIDAIEVRVSDNLFKNSMGVFVPGTGKIGLKIAASVGALAGDPTAELEVLARINEQDVAAAQQLIDEERVTVARMDTQEFIYCSVTLTSGDDVVSVTISGGHTNIIQIMRNGDVIFDAPPQQRVATASVCEGVDISIKQIYEFATQAPFEEIKFILQAAELNTLLAQEGIDRGYGLEIGRTLKGNIEQGLLGNDLMSRIQMMTSAASDARMGGATLPAMSNFGSGNQGIAATMPVVVAAEVFQNDEEQLARALIMSHLGAIYIKSYYPPLSAFCGNTVTSAAASMALVYLAGGTFEQSCYAIQNVISDSSGMVCDGAKSSCAMKVCTSSTTAVRSYLMAMGNHSVKNQGIVGEEVEQTIRNVGSMVRFGMPYTDKSIIDIMSA.

The protein belongs to the UPF0597 family.

The protein is UPF0597 protein VP2173 of Vibrio parahaemolyticus serotype O3:K6 (strain RIMD 2210633).